The following is a 715-amino-acid chain: Methionine--tRNA ligase (715 aa).

Residues 17–27 (PYANGPIHLGH) carry the 'HIGH' region motif. 4 residues coordinate Zn(2+): cysteine 148, cysteine 151, cysteine 161, and cysteine 164. A 'KMSKS' region motif is present at residues 359 to 363 (KMSKS). Lysine 362 lines the ATP pocket. One can recognise a tRNA-binding domain in the interval 614-715 (DLSKVELRVG…KDAKPGDRLK (102 aa)).

It belongs to the class-I aminoacyl-tRNA synthetase family. MetG type 1 subfamily. In terms of assembly, homodimer. The cofactor is Zn(2+).

Its subcellular location is the cytoplasm. The enzyme catalyses tRNA(Met) + L-methionine + ATP = L-methionyl-tRNA(Met) + AMP + diphosphate. In terms of biological role, is required not only for elongation of protein synthesis but also for the initiation of all mRNA translation through initiator tRNA(fMet) aminoacylation. The protein is Methionine--tRNA ligase of Leptospira interrogans serogroup Icterohaemorrhagiae serovar Lai (strain 56601).